The following is a 329-amino-acid chain: Ribose-phosphate pyrophosphokinase B (329 aa).

Mg(2+)-binding residues include D131, H133, and E146. Residues 227–242 (TGKIAIIIDDIADTCK) form a binding of phosphoribosylpyrophosphate region.

Belongs to the ribose-phosphate pyrophosphokinase family. Mg(2+) is required as a cofactor.

It is found in the cytoplasm. It catalyses the reaction D-ribose 5-phosphate + ATP = 5-phospho-alpha-D-ribose 1-diphosphate + AMP + H(+). It functions in the pathway metabolic intermediate biosynthesis; 5-phospho-alpha-D-ribose 1-diphosphate biosynthesis; 5-phospho-alpha-D-ribose 1-diphosphate from D-ribose 5-phosphate (route I): step 1/1. The sequence is that of Ribose-phosphate pyrophosphokinase B (prsB) from Dictyostelium discoideum (Social amoeba).